We begin with the raw amino-acid sequence, 385 residues long: S-adenosylmethionine synthase (385 aa).

H15 is an ATP binding site. D17 contacts Mg(2+). E43 is a K(+) binding site. L-methionine is bound by residues E56 and Q99. The interval 99–109 (QSVDIAQGVDR) is flexible loop. ATP contacts are provided by residues 164–166 (DAK), 230–231 (RF), D239, 245–246 (RK), and K266. Residue D239 participates in L-methionine binding. K270 contacts L-methionine.

This sequence belongs to the AdoMet synthase family. Homotetramer; dimer of dimers. Requires Mg(2+) as cofactor. K(+) is required as a cofactor.

It localises to the cytoplasm. The catalysed reaction is L-methionine + ATP + H2O = S-adenosyl-L-methionine + phosphate + diphosphate. It participates in amino-acid biosynthesis; S-adenosyl-L-methionine biosynthesis; S-adenosyl-L-methionine from L-methionine: step 1/1. Catalyzes the formation of S-adenosylmethionine (AdoMet) from methionine and ATP. The overall synthetic reaction is composed of two sequential steps, AdoMet formation and the subsequent tripolyphosphate hydrolysis which occurs prior to release of AdoMet from the enzyme. The chain is S-adenosylmethionine synthase from Alkalilimnicola ehrlichii (strain ATCC BAA-1101 / DSM 17681 / MLHE-1).